Here is a 435-residue protein sequence, read N- to C-terminus: ATP-dependent protease ATPase subunit HslU (435 aa).

Residues I18, 60–65, D248, E313, and R385 each bind ATP; that span reads GVGKTE.

Belongs to the ClpX chaperone family. HslU subfamily. As to quaternary structure, a double ring-shaped homohexamer of HslV is capped on each side by a ring-shaped HslU homohexamer. The assembly of the HslU/HslV complex is dependent on binding of ATP.

The protein resides in the cytoplasm. Functionally, ATPase subunit of a proteasome-like degradation complex; this subunit has chaperone activity. The binding of ATP and its subsequent hydrolysis by HslU are essential for unfolding of protein substrates subsequently hydrolyzed by HslV. HslU recognizes the N-terminal part of its protein substrates and unfolds these before they are guided to HslV for hydrolysis. The chain is ATP-dependent protease ATPase subunit HslU from Rhizobium etli (strain ATCC 51251 / DSM 11541 / JCM 21823 / NBRC 15573 / CFN 42).